The sequence spans 98 residues: Large ribosomal subunit protein uL23 (98 aa).

This sequence belongs to the universal ribosomal protein uL23 family. Part of the 50S ribosomal subunit. Contacts protein L29, and trigger factor when it is bound to the ribosome.

In terms of biological role, one of the early assembly proteins it binds 23S rRNA. One of the proteins that surrounds the polypeptide exit tunnel on the outside of the ribosome. Forms the main docking site for trigger factor binding to the ribosome. The protein is Large ribosomal subunit protein uL23 of Streptococcus sanguinis (strain SK36).